The following is a 188-amino-acid chain: Ribosomal RNA small subunit methyltransferase G (188 aa).

Residues glycine 69, phenylalanine 74, 119–120 (VQ), and arginine 134 contribute to the S-adenosyl-L-methionine site.

It belongs to the methyltransferase superfamily. RNA methyltransferase RsmG family.

The protein resides in the cytoplasm. It carries out the reaction guanosine(527) in 16S rRNA + S-adenosyl-L-methionine = N(7)-methylguanosine(527) in 16S rRNA + S-adenosyl-L-homocysteine. Its function is as follows. Specifically methylates the N7 position of guanine in position 527 of 16S rRNA. The chain is Ribosomal RNA small subunit methyltransferase G from Campylobacter jejuni subsp. jejuni serotype O:2 (strain ATCC 700819 / NCTC 11168).